The chain runs to 105 residues: UPF0145 protein HD_1349 (105 aa).

The protein belongs to the UPF0145 family.

In Haemophilus ducreyi (strain 35000HP / ATCC 700724), this protein is UPF0145 protein HD_1349.